The chain runs to 303 residues: 1D-myo-inositol 2-acetamido-2-deoxy-alpha-D-glucopyranoside deacetylase (303 aa).

Zn(2+) is bound by residues H15, D18, and H157.

This sequence belongs to the MshB deacetylase family. Zn(2+) serves as cofactor.

The enzyme catalyses 1D-myo-inositol 2-acetamido-2-deoxy-alpha-D-glucopyranoside + H2O = 1D-myo-inositol 2-amino-2-deoxy-alpha-D-glucopyranoside + acetate. Catalyzes the deacetylation of 1D-myo-inositol 2-acetamido-2-deoxy-alpha-D-glucopyranoside (GlcNAc-Ins) in the mycothiol biosynthesis pathway. This is 1D-myo-inositol 2-acetamido-2-deoxy-alpha-D-glucopyranoside deacetylase from Kribbella flavida (strain DSM 17836 / JCM 10339 / NBRC 14399).